A 761-amino-acid polypeptide reads, in one-letter code: Ribonucleoside-diphosphate reductase 1 subunit alpha (761 aa).

An ATP-cone domain is found at 5-95 (LLVTKRDGST…IFHLRKKAYG (91 aa)). ATP is bound by residues Lys9, 15–21 (ERINLDK), Thr55, and Lys91. Thr209 contributes to the GDP binding site. Cys225 and Cys462 are joined by a disulfide. DTTP contacts are provided by residues 232–234 (DSL), Arg262, and Arg269. Lys283 is modified (N6-acetyllysine). Position 437 (Asn437) interacts with GDP. The active-site Proton acceptor is Asn437. Catalysis depends on Cys439, which acts as the Cysteine radical intermediate. GDP-binding positions include Glu441 and 623 to 625 (ETS). The active-site Proton acceptor is Glu441.

The protein belongs to the ribonucleoside diphosphate reductase large chain family. As to quaternary structure, tetramer of two alpha (R1) and two beta (R2) subunits. The B1 protein is a dimer of alpha subunits. A radical transfer pathway occurs between 'Tyr-122' of R2 and R1. Binding of the substrate occurs primarily when the active-site cysteines are reduced.

The catalysed reaction is a 2'-deoxyribonucleoside 5'-diphosphate + [thioredoxin]-disulfide + H2O = a ribonucleoside 5'-diphosphate + [thioredoxin]-dithiol. With respect to regulation, under complex allosteric control mediated by deoxynucleoside triphosphates and ATP binding to separate specificity and activation sites on the alpha subunit. The type of nucleotide bound at the specificity site determines substrate preference. It seems probable that ATP makes the enzyme reduce CDP and UDP, dGTP favors ADP reduction and dTTP favors GDP reduction. Stimulated by ATP and inhibited by dATP binding to the activity site. In vitro, its activity is increased by dithiothreitol (DTT) or thioredoxins (non-specific). Inhibited by hydroxyurea, leads to dNTP depletion, replication fork arrest and genomic instability. Its function is as follows. Provides the precursors necessary for DNA synthesis. Catalyzes the biosynthesis of deoxyribonucleotides from the corresponding ribonucleotides. R1 contains the binding sites for both substrates and allosteric effectors and carries out the actual reduction of the ribonucleotide. It also provides redox-active cysteines. The sequence is that of Ribonucleoside-diphosphate reductase 1 subunit alpha (nrdA) from Escherichia coli (strain K12).